An 840-amino-acid polypeptide reads, in one-letter code: MAGPGSTGGQIGAGALAGGARSKVAPSVDFDHSCSDSVEYLTLNFGPFETVHRWRRLPPCDEFVGARRSKHTVVAYKDAIYVFGGDNGKTMLNDLLRFDVKDCSWCRAFTTGTPPAPRYHHSAVVYGSSMFVFGGYAGDIYSNSNLKNKNDLFEYKFATGQWTEWKIEGRLPVARSAHGATVYSDKLWIFAGYDGNARLNDMWTIGLQDRELTCWEEVAQSGEIPPSCCNFPVAVRRDKMFVFSGQSGAKITNNLFQFEFKDKTWTRIPTEHLLRGSPPPPQRRYGHTMVAFDRHLYVFGGAADNTLPNELHCYDVDFQTWEVVQPSSDSEVGGAEVPERACASEEVPTLTSEERGGFKKSRDVFGLDFGTTSAKQPAQPASELPSGRLFHAAAVISDAMYIFGGTVDNNIRSGEMYRFQFSCYPKCTLHEDYGRLWESRQFCDVEFVLGEKEECVQGHVAIVTARSRWLRRKITQARERLAQKLEQEAAPVPREAPGVAAGGARPPLLHVAIREAEARPFEVLMQFLYTDKIKYPRKGHVEDVLLIMDVYKLALSFQLCRLEQLCRQYIEASVDLQNVLVVCESAARLQLSQLKEHCLNFVVKESHFNQVIMMKEFERLSSPLIVEIVRRKQQPPPRTPSDQPVDIGTSLIQDMKAYLEGAGAEFCDITLLLDGHPRPAHKAILAARSSYFEAMFRSFMPEDGQVNISIGEMVPSRQAFESMLRYIYYGEVNMPPEDSLYLFAAPYYYGFYNNRLQAYCKQNLEMNATVQNVLQILEAADKTQALDMKRHCLHIIVHQFTKVSKLPTLRSLSQQLLLDIIDSLASHISDKQCAELGADI.

Ala2 is subject to N-acetylalanine. Kelch repeat units lie at residues 79–128 (AIYV…VYGS), 130–185 (MFVF…VYSD), 187–238 (LWIF…VRRD), 239–285 (KMFV…QRRY), 295–341 (HLYV…PERA), and 399–450 (AMYI…FVLG). A disordered region spans residues 329–353 (DSEVGGAEVPERACASEEVPTLTSE). 2 consecutive BTB domains span residues 443 to 537 (CDVE…KYPR) and 667 to 736 (CDIT…NMPP).

Belongs to the LZTR1 family. Homodimer. Component of the BCR(LZTR1) E3 ubiquitin ligase complex, at least composed of CUL3, LZTR1 and RBX1. Interacts with Ras (K-Ras/KRAS, N-Ras/NRAS and H-Ras/HRAS). Interacts with RAF1. Interacts with SHOC2. Interacts with PPP1CB. Phosphorylated on tyrosine upon induction of apoptosis, leading to its degradation by the proteasome.

The protein resides in the endomembrane system. It is found in the recycling endosome. The protein localises to the golgi apparatus. It participates in protein modification; protein ubiquitination. Substrate-specific adapter of a BCR (BTB-CUL3-RBX1) E3 ubiquitin-protein ligase complex that mediates ubiquitination of Ras (K-Ras/KRAS, N-Ras/NRAS and H-Ras/HRAS). Is a negative regulator of RAS-MAPK signaling that acts by controlling Ras levels and decreasing Ras association with membranes. The polypeptide is Leucine-zipper-like transcriptional regulator 1 (LZTR1) (Pongo abelii (Sumatran orangutan)).